Reading from the N-terminus, the 467-residue chain is ATP synthase subunit beta (467 aa).

Residue 154-161 (GGAGVGKT) coordinates ATP.

The protein belongs to the ATPase alpha/beta chains family. In terms of assembly, F-type ATPases have 2 components, CF(1) - the catalytic core - and CF(0) - the membrane proton channel. CF(1) has five subunits: alpha(3), beta(3), gamma(1), delta(1), epsilon(1). CF(0) has three main subunits: a(1), b(2) and c(9-12). The alpha and beta chains form an alternating ring which encloses part of the gamma chain. CF(1) is attached to CF(0) by a central stalk formed by the gamma and epsilon chains, while a peripheral stalk is formed by the delta and b chains.

It localises to the cell inner membrane. It carries out the reaction ATP + H2O + 4 H(+)(in) = ADP + phosphate + 5 H(+)(out). Functionally, produces ATP from ADP in the presence of a proton gradient across the membrane. The catalytic sites are hosted primarily by the beta subunits. The polypeptide is ATP synthase subunit beta (Petrotoga mobilis (strain DSM 10674 / SJ95)).